We begin with the raw amino-acid sequence, 205 residues long: Cytochrome c biogenesis ATP-binding export protein CcmA 2 (205 aa).

The ABC transporter domain occupies 2–205 (LEARDLHCER…LALTGGEAGL (204 aa)). ATP is bound at residue 34–41 (GGNGAGKT).

This sequence belongs to the ABC transporter superfamily. CcmA exporter (TC 3.A.1.107) family. In terms of assembly, the complex is composed of two ATP-binding proteins (CcmA) and two transmembrane proteins (CcmB).

The protein localises to the cell inner membrane. The enzyme catalyses heme b(in) + ATP + H2O = heme b(out) + ADP + phosphate + H(+). Its function is as follows. Part of the ABC transporter complex CcmAB involved in the biogenesis of c-type cytochromes; once thought to export heme, this seems not to be the case, but its exact role is uncertain. Responsible for energy coupling to the transport system. This chain is Cytochrome c biogenesis ATP-binding export protein CcmA 2, found in Salmonella paratyphi A (strain ATCC 9150 / SARB42).